Here is a 147-residue protein sequence, read N- to C-terminus: D-aminoacyl-tRNA deacylase (147 aa).

Residues 136-137 carry the Gly-cisPro motif, important for rejection of L-amino acids motif; the sequence is GP.

It belongs to the DTD family. In terms of assembly, homodimer.

The protein resides in the cytoplasm. It carries out the reaction glycyl-tRNA(Ala) + H2O = tRNA(Ala) + glycine + H(+). The enzyme catalyses a D-aminoacyl-tRNA + H2O = a tRNA + a D-alpha-amino acid + H(+). An aminoacyl-tRNA editing enzyme that deacylates mischarged D-aminoacyl-tRNAs. Also deacylates mischarged glycyl-tRNA(Ala), protecting cells against glycine mischarging by AlaRS. Acts via tRNA-based rather than protein-based catalysis; rejects L-amino acids rather than detecting D-amino acids in the active site. By recycling D-aminoacyl-tRNA to D-amino acids and free tRNA molecules, this enzyme counteracts the toxicity associated with the formation of D-aminoacyl-tRNA entities in vivo and helps enforce protein L-homochirality. In Sulfurihydrogenibium sp. (strain YO3AOP1), this protein is D-aminoacyl-tRNA deacylase.